We begin with the raw amino-acid sequence, 330 residues long: NADH-quinone oxidoreductase subunit H (330 aa).

Helical transmembrane passes span 5–25 (LLTL…VLTL), 78–98 (WVFM…FAVI), 120–140 (IGLL…ALGG), 155–175 (AMAQ…PVVM), 191–211 (SLPN…AIMA), 243–263 (FFVG…VLFL), 271–291 (LPGI…FIWV), and 308–328 (WKIL…WLIW).

The protein belongs to the complex I subunit 1 family. In terms of assembly, NDH-1 is composed of 14 different subunits. Subunits NuoA, H, J, K, L, M, N constitute the membrane sector of the complex.

Its subcellular location is the cell inner membrane. It carries out the reaction a quinone + NADH + 5 H(+)(in) = a quinol + NAD(+) + 4 H(+)(out). Functionally, NDH-1 shuttles electrons from NADH, via FMN and iron-sulfur (Fe-S) centers, to quinones in the respiratory chain. The immediate electron acceptor for the enzyme in this species is believed to be ubiquinone. Couples the redox reaction to proton translocation (for every two electrons transferred, four hydrogen ions are translocated across the cytoplasmic membrane), and thus conserves the redox energy in a proton gradient. This subunit may bind ubiquinone. The sequence is that of NADH-quinone oxidoreductase subunit H from Syntrophotalea carbinolica (strain DSM 2380 / NBRC 103641 / GraBd1) (Pelobacter carbinolicus).